Reading from the N-terminus, the 400-residue chain is Argininosuccinate synthase (400 aa).

Residues 9–17 and A37 contribute to the ATP site; that span reads AYSGGVDTS. L-citrulline is bound at residue Y88. G118 is an ATP binding site. L-aspartate-binding residues include T120, N124, and D125. N124 is an L-citrulline binding site. L-citrulline-binding residues include R128, S176, S185, E261, and Y273.

Belongs to the argininosuccinate synthase family. Type 1 subfamily. Homotetramer.

The protein resides in the cytoplasm. It catalyses the reaction L-citrulline + L-aspartate + ATP = 2-(N(omega)-L-arginino)succinate + AMP + diphosphate + H(+). It functions in the pathway amino-acid biosynthesis; L-arginine biosynthesis; L-arginine from L-ornithine and carbamoyl phosphate: step 2/3. The protein is Argininosuccinate synthase of Prochlorococcus marinus (strain MIT 9211).